Reading from the N-terminus, the 321-residue chain is Protein APA1 (321 aa).

The interval 50–70 is disordered; that stretch reads SLIEKPERGQTPEGEDPLGKP. A substrate-binding site is contributed by lysine 54. At threonine 60 the chain carries Phosphothreonine. Residues 93–94, asparagine 145, and 151–154 contribute to the substrate site; these read NK and GSSL. The active-site Nucleophile is histidine 158. Substrate is bound by residues glutamine 160, 273 to 275, methionine 280, and lysine 284; that span reads NST.

The protein belongs to the ATP adenylyltransferase family. In terms of assembly, monomer. A divalent metal cation is required as a cofactor. In terms of processing, the N-terminus is blocked.

It is found in the cytoplasm. The protein resides in the nucleus. It catalyses the reaction ADP + ATP + H(+) = P(1),P(4)-bis(5'-adenosyl) tetraphosphate + phosphate. The catalysed reaction is sulfate + ADP + H(+) = adenosine 5'-phosphosulfate + phosphate. In terms of biological role, ap4A phosphorylase catalyzes the phosphorolytic degradation of bis(5'-adenosyl) tetraphosphate (Ap4A) into ADP and ATP. Can also use other Np4N' nucleotides (where N and N' stand for A,C,G or U) as substrates with equal efficiency. Cannot catalyze the reverse reaction. Additionally, this enzyme can also catalyze the phosphorolytic degradation of adenosine 5'-phosphosulfate (AMPS) into ADP and sulfate, the reversible exchange reaction between inorganic phosphate and the beta-phosphate of a nucleoside diphosphate (NDP), and the synthesis of Ap4A from AMPS plus ATP. In Saccharomyces cerevisiae (strain ATCC 204508 / S288c) (Baker's yeast), this protein is Protein APA1.